The sequence spans 483 residues: Regulatory protein ViaA (483 aa).

This sequence belongs to the ViaA family. Homodimer. Interacts with RavA.

It localises to the cytoplasm. In terms of biological role, component of the RavA-ViaA chaperone complex, which may act on the membrane to optimize the function of some of the respiratory chains. ViaA stimulates the ATPase activity of RavA. The protein is Regulatory protein ViaA of Salmonella heidelberg (strain SL476).